The sequence spans 143 residues: Nucleoside diphosphate kinase (143 aa).

ATP-binding residues include Lys-11, Phe-59, Arg-87, Thr-93, Arg-104, and Asn-114. Residue His-117 is the Pros-phosphohistidine intermediate of the active site.

This sequence belongs to the NDK family. Homotetramer. The cofactor is Mg(2+).

Its subcellular location is the cytoplasm. It carries out the reaction a 2'-deoxyribonucleoside 5'-diphosphate + ATP = a 2'-deoxyribonucleoside 5'-triphosphate + ADP. The enzyme catalyses a ribonucleoside 5'-diphosphate + ATP = a ribonucleoside 5'-triphosphate + ADP. Major role in the synthesis of nucleoside triphosphates other than ATP. The ATP gamma phosphate is transferred to the NDP beta phosphate via a ping-pong mechanism, using a phosphorylated active-site intermediate. The sequence is that of Nucleoside diphosphate kinase from Colwellia psychrerythraea (strain 34H / ATCC BAA-681) (Vibrio psychroerythus).